The following is a 215-amino-acid chain: GTP-binding nuclear protein ran-1 (215 aa).

The Small GTPase Ran-type domain occupies Gly-6–Asp-170. Asp-17–Thr-24 contacts GTP. The tract at residues Lys-36 to Val-44 is switch-I. GTP-binding positions include Gly-67, Asn-121–Asp-124, and Ser-149–Lys-151. The interval Gly-67–Gln-83 is switch-II.

The protein belongs to the small GTPase superfamily. Ran family. As to quaternary structure, found in a nuclear export complex with RanGTP, exportin and pre-miRNA.

It is found in the nucleus. The protein resides in the chromosome. It localises to the centromere. Its subcellular location is the kinetochore. In terms of biological role, ran GTPase system comprises ran-1, ran-2 and ran-3 and is essential in nucleocytoplasmic transport. Ran-1 is a GTP-binding protein that mediates the interaction between mitotic chromosomes and kinetochore microtubules. Plays a crucial role in nuclear envelope assembly at the end of each cell division. Required for the import of protein into the nucleus and also for RNA export. RCC1 (ran-3)/Ran (ran-1) complex (together with other proteins) acts as a component of a signal transmission pathway that detects unreplicated DNA. The polypeptide is GTP-binding nuclear protein ran-1 (ran-1) (Caenorhabditis elegans).